The chain runs to 80 residues: WAP four-disulfide core domain protein 15A (80 aa).

Positions M1–A20 are cleaved as a signal peptide. Residues V29–W76 form the WAP domain. Disulfide bonds link C36-C64, C43-C68, C51-C63, and C57-C72.

The protein resides in the secreted. In terms of biological role, antibacterial protein. This Mus musculus (Mouse) protein is WAP four-disulfide core domain protein 15A.